We begin with the raw amino-acid sequence, 298 residues long: Bifunctional protein FolD (298 aa).

NADP(+) is bound by residues Gly165–Ser167, Ser190, and Ile231.

The protein belongs to the tetrahydrofolate dehydrogenase/cyclohydrolase family. Homodimer.

It carries out the reaction (6R)-5,10-methylene-5,6,7,8-tetrahydrofolate + NADP(+) = (6R)-5,10-methenyltetrahydrofolate + NADPH. The enzyme catalyses (6R)-5,10-methenyltetrahydrofolate + H2O = (6R)-10-formyltetrahydrofolate + H(+). It functions in the pathway one-carbon metabolism; tetrahydrofolate interconversion. Catalyzes the oxidation of 5,10-methylenetetrahydrofolate to 5,10-methenyltetrahydrofolate and then the hydrolysis of 5,10-methenyltetrahydrofolate to 10-formyltetrahydrofolate. The protein is Bifunctional protein FolD of Prochlorococcus marinus (strain MIT 9515).